A 285-amino-acid polypeptide reads, in one-letter code: Tropomyosin alpha-3 chain (285 aa).

A coiled-coil region spans residues 1–285 (MMEAIKKKMQ…DHALNDMTSI (285 aa)). Methionine 2 is subject to N-acetylmethionine. Residue methionine 2 is modified to N-acetylalanine. Phosphothreonine is present on threonine 54. A phosphoserine mark is found at serine 62 and serine 88. Threonine 109 carries the post-translational modification Phosphothreonine. A phosphoserine mark is found at serine 207 and serine 216. At isoleucine 228 the chain carries N6-acetyllysine. Threonine 253 carries the post-translational modification Phosphothreonine. Tyrosine 262 carries the post-translational modification Phosphotyrosine. Serine 272 carries the phosphoserine modification. The residue at position 283 (threonine 283) is a Phosphothreonine. A Phosphoserine modification is found at serine 284.

The protein belongs to the tropomyosin family. In terms of assembly, homodimer. Heterodimer of an alpha (TPM1, TPM3 or TPM4) and a beta (TPM2) chain. Interacts with TMOD1. Interacts with TNNT1.

The protein resides in the cytoplasm. Its subcellular location is the cytoskeleton. In terms of biological role, binds to actin filaments in muscle and non-muscle cells. Plays a central role, in association with the troponin complex, in the calcium dependent regulation of vertebrate striated muscle contraction. Smooth muscle contraction is regulated by interaction with caldesmon. In non-muscle cells is implicated in stabilizing cytoskeleton actin filaments. In Mus musculus (Mouse), this protein is Tropomyosin alpha-3 chain (Tpm3).